Reading from the N-terminus, the 64-residue chain is Large ribosomal subunit protein bL35 (64 aa).

Belongs to the bacterial ribosomal protein bL35 family.

The polypeptide is Large ribosomal subunit protein bL35 (Alcanivorax borkumensis (strain ATCC 700651 / DSM 11573 / NCIMB 13689 / SK2)).